The primary structure comprises 118 residues: Large ribosomal subunit protein bL17 (118 aa).

It belongs to the bacterial ribosomal protein bL17 family. In terms of assembly, part of the 50S ribosomal subunit. Contacts protein L32.

This chain is Large ribosomal subunit protein bL17, found in Campylobacter fetus subsp. fetus (strain 82-40).